Reading from the N-terminus, the 193-residue chain is MDIELILLIVVLFLTPYLIALFIIFNPPYCILDYLLYKKYRKAKEEWHYITSTNMGMNRSRWIFILIVEIIALCSGFYILININRPHDEILTFSLIFLFIAIIYDKLTPASGTVEIYKEGIAVYIKIFNTLKPFLNRYIVLPWKFFKGYKIKSKNNTKYVILVPKSRLFFSIYLIDRDGNVEKTIRNHLNPIQ.

A run of 3 helical transmembrane segments spans residues 5 to 25 (LILLIVVLFLTPYLIALFIIF), 63 to 83 (IFILIVEIIALCSGFYILINI), and 90 to 110 (ILTFSLIFLFIAIIYDKLTPA).

It localises to the cell membrane. This is an uncharacterized protein from Methanocaldococcus jannaschii (strain ATCC 43067 / DSM 2661 / JAL-1 / JCM 10045 / NBRC 100440) (Methanococcus jannaschii).